Consider the following 317-residue polypeptide: Ribosomal RNA small subunit methyltransferase A (317 aa).

6 residues coordinate S-adenosyl-L-methionine: N37, V39, G64, E85, D115, and N134. A disordered region spans residues 293–317 (GGSDEATSTGRDARAPDISGHASAS).

It belongs to the class I-like SAM-binding methyltransferase superfamily. rRNA adenine N(6)-methyltransferase family. RsmA subfamily.

The protein localises to the cytoplasm. It carries out the reaction adenosine(1518)/adenosine(1519) in 16S rRNA + 4 S-adenosyl-L-methionine = N(6)-dimethyladenosine(1518)/N(6)-dimethyladenosine(1519) in 16S rRNA + 4 S-adenosyl-L-homocysteine + 4 H(+). In terms of biological role, specifically dimethylates two adjacent adenosines (A1518 and A1519) in the loop of a conserved hairpin near the 3'-end of 16S rRNA in the 30S particle. May play a critical role in biogenesis of 30S subunits. This Mycobacterium bovis (strain BCG / Tokyo 172 / ATCC 35737 / TMC 1019) protein is Ribosomal RNA small subunit methyltransferase A.